The following is a 289-amino-acid chain: ATP synthase gamma chain (289 aa).

This sequence belongs to the ATPase gamma chain family. As to quaternary structure, F-type ATPases have 2 components, CF(1) - the catalytic core - and CF(0) - the membrane proton channel. CF(1) has five subunits: alpha(3), beta(3), gamma(1), delta(1), epsilon(1). CF(0) has three main subunits: a, b and c.

The protein resides in the cell inner membrane. Its function is as follows. Produces ATP from ADP in the presence of a proton gradient across the membrane. The gamma chain is believed to be important in regulating ATPase activity and the flow of protons through the CF(0) complex. This chain is ATP synthase gamma chain, found in Aromatoleum aromaticum (strain DSM 19018 / LMG 30748 / EbN1) (Azoarcus sp. (strain EbN1)).